Reading from the N-terminus, the 238-residue chain is Aspartate/glutamate leucyltransferase (238 aa).

It belongs to the R-transferase family. Bpt subfamily.

The protein resides in the cytoplasm. It carries out the reaction N-terminal L-glutamyl-[protein] + L-leucyl-tRNA(Leu) = N-terminal L-leucyl-L-glutamyl-[protein] + tRNA(Leu) + H(+). The enzyme catalyses N-terminal L-aspartyl-[protein] + L-leucyl-tRNA(Leu) = N-terminal L-leucyl-L-aspartyl-[protein] + tRNA(Leu) + H(+). In terms of biological role, functions in the N-end rule pathway of protein degradation where it conjugates Leu from its aminoacyl-tRNA to the N-termini of proteins containing an N-terminal aspartate or glutamate. This Aeromonas salmonicida (strain A449) protein is Aspartate/glutamate leucyltransferase.